Consider the following 404-residue polypeptide: AT-hook motif nuclear-localized protein 3 (404 aa).

Disordered stretches follow at residues 1–51 (MEER…VPPT), 70–100 (PFSLTMPTENTSAEQLKKKRGRPRKYNPDGT), and 113–133 (SVPLTSEFPPRKRGRGRGKSN). Positions 7–19 (TNINNNITSSFGL) are enriched in polar residues. Pro residues predominate over residues 35-51 (DPPPRPENPNPFLVPPT). Positions 71-83 (FSLTMPTENTSAE) are enriched in polar residues. The Bipartite nuclear localization signal signature appears at 86–94 (KKKRGRPRK). The a.T hook DNA-binding region spans 86-98 (KKKRGRPRKYNPD). Residues 123–133 (RKRGRGRGKSN) are compositionally biased toward basic residues. Residues 163-308 (GANFTPHVLI…RFGAQPSSIS (146 aa)) enclose the PPC domain. The interval 359 to 404 (PFSSIPVGGGGGGEVGEEEGEEDDDELEGEDEEFGGDSQSDNEIPS) is disordered. Residues 373–393 (VGEEEGEEDDDELEGEDEEFG) show a composition bias toward acidic residues.

Homodimer. Interacts with AHL4. As to expression, expressed in both procambium and xylem precursors of the root meristem. Also detected in the endodermis in the late elongation zone and onwards.

Its subcellular location is the nucleus. In terms of biological role, transcription factor that specifically binds AT-rich DNA sequences related to the nuclear matrix attachment regions (MARs). Acts redundantly with AHL4 to regulate the formation of tissue boundary between the xylem and procambium in the root meristem. The sequence is that of AT-hook motif nuclear-localized protein 3 from Arabidopsis thaliana (Mouse-ear cress).